The primary structure comprises 348 residues: Probable dual-specificity RNA methyltransferase RlmN (348 aa).

The active-site Proton acceptor is the E93. The region spanning T99–D333 is the Radical SAM core domain. C106 and C338 are disulfide-bonded. [4Fe-4S] cluster contacts are provided by C113, C117, and C120. S-adenosyl-L-methionine contacts are provided by residues G160–E161, S190, S219–H221, and N295. C338 (S-methylcysteine intermediate) is an active-site residue.

This sequence belongs to the radical SAM superfamily. RlmN family. The cofactor is [4Fe-4S] cluster.

The protein localises to the cytoplasm. It catalyses the reaction adenosine(2503) in 23S rRNA + 2 reduced [2Fe-2S]-[ferredoxin] + 2 S-adenosyl-L-methionine = 2-methyladenosine(2503) in 23S rRNA + 5'-deoxyadenosine + L-methionine + 2 oxidized [2Fe-2S]-[ferredoxin] + S-adenosyl-L-homocysteine. The enzyme catalyses adenosine(37) in tRNA + 2 reduced [2Fe-2S]-[ferredoxin] + 2 S-adenosyl-L-methionine = 2-methyladenosine(37) in tRNA + 5'-deoxyadenosine + L-methionine + 2 oxidized [2Fe-2S]-[ferredoxin] + S-adenosyl-L-homocysteine. In terms of biological role, specifically methylates position 2 of adenine 2503 in 23S rRNA and position 2 of adenine 37 in tRNAs. The sequence is that of Probable dual-specificity RNA methyltransferase RlmN from Prochlorococcus marinus (strain MIT 9515).